Consider the following 654-residue polypeptide: Interferon-induced GTP-binding protein Mx1 (654 aa).

Position 1 is an N-acetylmethionine (Met-1). Composition is skewed to basic and acidic residues over residues 1–12 (MVLSDLDIKEPD) and 23–32 (DMVREHETES). Positions 1–33 (MVLSDLDIKEPDSPESGLNGSDDMVREHETESK) are disordered. In terms of domain architecture, Dynamin-type G spans 62-335 (DLALPAIAVI…LIMHICKTLP (274 aa)). Residues 72-79 (GDQSSGKS) are G1 motif. 72 to 79 (GDQSSGKS) contacts GTP. The tract at residues 97 to 99 (VTR) is G2 motif. The interval 173-176 (DLPG) is G3 motif. GTP-binding positions include 173–177 (DLPGI) and 242–245 (TKPD). Residues 242 to 245 (TKPD) form a G4 motif region. The segment at 274–277 (KCRG) is G5 motif. A bundle signaling element (BSE) region spans residues 336-361 (LLENQIKETHQRITEELQKYGKDIPE). The segment at 361–528 (EEESEKMFSL…HFQMEQLVYC (168 aa)) is middle domain. Positions 362–624 (EESEKMFSLI…KDQYDWLLKE (263 aa)) are stalk. Residues 544 to 563 (EAEEEKKKKSNHYYQSEDSE) are disordered. The tract at residues 549 to 552 (KKKK) is critical for lipid-binding. Positions 566-654 (TAEIFQHLMA…ARQRLAKFPG (89 aa)) constitute a GED domain.

Belongs to the TRAFAC class dynamin-like GTPase superfamily. Dynamin/Fzo/YdjA family. As to quaternary structure, homooligomer. Oligomerizes into multimeric filamentous or ring-like structures by virtue of its stalk domain. Oligomerization is critical for GTPase activity, protein stability, and recognition of viral target structures. Interacts with TRPC1, TRPC3, TRPC4, TRPC5, TRPC6 and TRPC7. Interacts with HSPA5. Interacts with DDX39A and DDX39B. Interacts with TUBB/TUBB5. ISGylated.

The protein localises to the cytoplasm. It localises to the endoplasmic reticulum membrane. The protein resides in the perinuclear region. Functionally, interferon-induced dynamin-like GTPase with antiviral activity. This chain is Interferon-induced GTP-binding protein Mx1 (MX1), found in Ovis aries (Sheep).